Consider the following 326-residue polypeptide: MGVQFNDSIPKKNISITDLKNKTVAIDSMNIIYQFLSSIRLRDGAPLRNSKGEITSPYNGIFYKTIYLLNNEITPIWVFDGKPPELKLKTREERRKVKEKASKDYEIAKREENIEDMQKYAKRINYLEPNTVDNCKKLLKLMGIPYIDAPSEGEAQCAHMIKNGDAYCVVSQDYDALLYGAPRTVRNITASNKPLELMEIEDILKPLDISIDDLIDMAILIGTDYNIGGIKGIGPKKALTIIKNKKMNEYIKDIENYEEIKNIFKNPKVVDYTKEDIKLKSPNIEGLKEFLIEENDFSPNRILPSIKKLDKLLNEKRSQTSLDSWF.

The interval 1 to 98 is N-domain; it reads MGVQFNDSIP…KTREERRKVK (98 aa). Positions 27, 80, 152, 154, 173, 175, and 224 each coordinate Mg(2+). An I-domain region spans residues 116–245; it reads DMQKYAKRIN…KKALTIIKNK (130 aa). The tract at residues 318–326 is interaction with PCNA; that stretch reads SQTSLDSWF.

It belongs to the XPG/RAD2 endonuclease family. FEN1 subfamily. As to quaternary structure, interacts with PCNA. PCNA stimulates the nuclease activity without altering cleavage specificity. Mg(2+) serves as cofactor.

Structure-specific nuclease with 5'-flap endonuclease and 5'-3' exonuclease activities involved in DNA replication and repair. During DNA replication, cleaves the 5'-overhanging flap structure that is generated by displacement synthesis when DNA polymerase encounters the 5'-end of a downstream Okazaki fragment. Binds the unpaired 3'-DNA end and kinks the DNA to facilitate 5' cleavage specificity. Cleaves one nucleotide into the double-stranded DNA from the junction in flap DNA, leaving a nick for ligation. Also involved in the base excision repair (BER) pathway. Acts as a genome stabilization factor that prevents flaps from equilibrating into structures that lead to duplications and deletions. Also possesses 5'-3' exonuclease activity on nicked or gapped double-stranded DNA. This is Flap endonuclease 1 from Methanococcus aeolicus (strain ATCC BAA-1280 / DSM 17508 / OCM 812 / Nankai-3).